The chain runs to 112 residues: Peptidyl-prolyl cis-trans isomerase (112 aa).

Residues 1–22 (MGVEKQVISSGNGQDFPKPGDR) form a disordered region. A PPIase FKBP-type domain is found at 20 to 108 (GDRITMHYTG…LFDVELLAIN (89 aa)).

Belongs to the FKBP-type PPIase family. FKBP1 subfamily.

Its subcellular location is the cytoplasm. It is found in the nucleus. It carries out the reaction [protein]-peptidylproline (omega=180) = [protein]-peptidylproline (omega=0). Its function is as follows. PPIases accelerate the folding of proteins. It catalyzes the cis-trans isomerization of proline imidic peptide bonds in oligopeptides. Has an important role in sexual development and serves as the target for rapamycin action. The sequence is that of Peptidyl-prolyl cis-trans isomerase (fkh1) from Schizosaccharomyces pombe (strain 972 / ATCC 24843) (Fission yeast).